A 296-amino-acid chain; its full sequence is Probable DNA-directed RNA polymerase III subunit RPC6 (296 aa).

Belongs to the eukaryotic RPC34/RPC39 RNA polymerase subunit family.

Its subcellular location is the nucleus. In terms of biological role, DNA-dependent RNA polymerase catalyzes the transcription of DNA into RNA using the four ribonucleoside triphosphates as substrates. Specific peripheric component of RNA polymerase III which synthesizes small RNAs, such as 5S rRNA and tRNAs. The sequence is that of Probable DNA-directed RNA polymerase III subunit RPC6 from Caenorhabditis elegans.